Consider the following 144-residue polypeptide: Large ribosomal subunit protein uL11 (144 aa).

It belongs to the universal ribosomal protein uL11 family. Part of the ribosomal stalk of the 50S ribosomal subunit. Interacts with L10 and the large rRNA to form the base of the stalk. L10 forms an elongated spine to which L12 dimers bind in a sequential fashion forming a multimeric L10(L12)X complex. Post-translationally, one or more lysine residues are methylated.

In terms of biological role, forms part of the ribosomal stalk which helps the ribosome interact with GTP-bound translation factors. In Polaromonas sp. (strain JS666 / ATCC BAA-500), this protein is Large ribosomal subunit protein uL11.